We begin with the raw amino-acid sequence, 213 residues long: Skin granule protein (213 aa).

The signal sequence occupies residues methionine 1 to glycine 26. Tandem repeats lie at residues leucine 27–glycine 48, leucine 49–glycine 70, and leucine 71–glycine 92. The segment at leucine 27–glutamine 104 is 4 X 22 AA approximate tandem repeats. One copy of the 4; truncated repeat lies at leucine 93–glutamine 104. The segment at tryptophan 162–lysine 213 is disordered. Positions arginine 166–lysine 213 are enriched in basic residues.

Its subcellular location is the secreted. This Xenopus laevis (African clawed frog) protein is Skin granule protein (sgp).